Reading from the N-terminus, the 316-residue chain is tRNA uridine(34) hydroxylase (316 aa).

A Rhodanese domain is found at 123-217 (LDEDTVVIDA…YGKNPETRGE (95 aa)). Cys-177 serves as the catalytic Cysteine persulfide intermediate.

Belongs to the TrhO family.

It carries out the reaction uridine(34) in tRNA + AH2 + O2 = 5-hydroxyuridine(34) in tRNA + A + H2O. Its function is as follows. Catalyzes oxygen-dependent 5-hydroxyuridine (ho5U) modification at position 34 in tRNAs. This is tRNA uridine(34) hydroxylase from Enterococcus faecalis (strain ATCC 700802 / V583).